The chain runs to 213 residues: MKILVTGFDPFGGAHINPATEAIKLLPQQINGAEIITIQIPTVFRKSIDVLFRAIKKESPDMVICIGQAGGRYDITVERVAINVDDARIEDNEGNLPIDSPIFEDGAPAYFSDLPIKAMVQAMQAANIPASISNTAGTFVCNHLMYAALHYASQYQPDMKVGFIHIPYLVEQVVGKANTPSMNIQDIVRGLTVAIHAAIENKRDIKVQGGAIC.

Catalysis depends on residues Glu78, Cys141, and His165.

Belongs to the peptidase C15 family. Homotetramer.

It is found in the cytoplasm. The catalysed reaction is Release of an N-terminal pyroglutamyl group from a polypeptide, the second amino acid generally not being Pro.. Its function is as follows. Removes 5-oxoproline from various penultimate amino acid residues except L-proline. This chain is Pyrrolidone-carboxylate peptidase, found in Alkaliphilus oremlandii (strain OhILAs) (Clostridium oremlandii (strain OhILAs)).